The primary structure comprises 87 residues: Kappa 1b-bungarotoxin (87 aa).

Residues 1–21 (MKTLLLTLVVVTIVCLDLGYT) form the signal peptide. Disulfide bonds link Cys-24–Cys-42, Cys-35–Cys-63, Cys-48–Cys-52, Cys-67–Cys-79, and Cys-80–Cys-85.

It belongs to the three-finger toxin family. Long-chain subfamily. Kappa-neurotoxin sub-subfamily. In terms of assembly, homo- and heterodimer; non-covalently linked. Expressed by the venom gland.

The protein resides in the secreted. Functionally, postsynaptic neurotoxin that binds and inhibits neuronal nicotinic acetylcholine receptors (nAChR) with high affinity (IC(50)&lt;100 nM). Is a selective, and slowly reversible antagonist of alpha-3/CHRNA3-containing and some alpha-4/CHRNA4-containing AChRs. This Bungarus candidus (Malayan krait) protein is Kappa 1b-bungarotoxin.